The primary structure comprises 899 residues: Ewing's tumor-associated antigen 1 homolog (899 aa).

The tract at residues methionine 1–arginine 82 is disordered. Residues serine 71–lysine 81 show a composition bias toward basic and acidic residues. The short motif at isoleucine 105–serine 111 is the ATR-activation domain (AAD) element. Residues threonine 180–glutamate 210 are a coiled coil. Glycyl lysine isopeptide (Lys-Gly) (interchain with G-Cter in SUMO2) cross-links involve residues lysine 416 and lysine 444. Phosphoserine is present on serine 467. Glycyl lysine isopeptide (Lys-Gly) (interchain with G-Cter in SUMO2) cross-links involve residues lysine 485 and lysine 539. An RBM1 motif motif is present at residues aspartate 607 to glutamate 622. Phosphoserine is present on serine 810. Residues asparagine 833 to arginine 899 form a disordered region. The segment covering proline 859–arginine 877 has biased composition (basic and acidic residues). The short motif at arginine 868–alanine 890 is the RBM2 motif element.

As to quaternary structure, interacts (via RBM1 motif) with RPA1. Interacts (via RBM2 motif) with RPA2. Interacts (via the ATR-activation domain motif) with ATR. Phosphorylated by ATR.

The protein resides in the nucleus. Functionally, replication stress response protein that accumulates at DNA damage sites and promotes replication fork progression and integrity. Recruited to stalled replication forks via interaction with the RPA complex and directly stimulates ATR kinase activity independently of TOPBP1. Probably only regulates a subset of ATR targets. In Bos taurus (Bovine), this protein is Ewing's tumor-associated antigen 1 homolog.